Reading from the N-terminus, the 184-residue chain is TATA-box-binding protein (184 aa).

A run of 2 repeats spans residues 9 to 85 and 100 to 178.

It belongs to the TBP family.

Functionally, general factor that plays a role in the activation of archaeal genes transcribed by RNA polymerase. Binds specifically to the TATA box promoter element which lies close to the position of transcription initiation. This is TATA-box-binding protein from Picrophilus torridus (strain ATCC 700027 / DSM 9790 / JCM 10055 / NBRC 100828 / KAW 2/3).